The sequence spans 891 residues: Aconitate hydratase A (891 aa).

[4Fe-4S] cluster is bound by residues Cys-435, Cys-501, and Cys-504.

It belongs to the aconitase/IPM isomerase family. Monomer. The cofactor is [4Fe-4S] cluster.

The catalysed reaction is citrate = D-threo-isocitrate. The enzyme catalyses (2S,3R)-3-hydroxybutane-1,2,3-tricarboxylate = 2-methyl-cis-aconitate + H2O. It functions in the pathway carbohydrate metabolism; tricarboxylic acid cycle; isocitrate from oxaloacetate: step 2/2. Its pathway is organic acid metabolism; propanoate degradation. Involved in the catabolism of short chain fatty acids (SCFA) via the tricarboxylic acid (TCA)(acetyl degradation route) and the 2-methylcitrate cycle I (propionate degradation route). Catalyzes the reversible isomerization of citrate to isocitrate via cis-aconitate. Also catalyzes the hydration of 2-methyl-cis-aconitate to yield (2R,3S)-2-methylisocitrate. The (2S,3S)-2-methylcitrate (2-MC) is a very poor substrate. The apo form of AcnA functions as a RNA-binding regulatory protein. This chain is Aconitate hydratase A (acnA), found in Salmonella typhimurium (strain LT2 / SGSC1412 / ATCC 700720).